The primary structure comprises 306 residues: Aquaporin-1 (306 aa).

Residues 1 to 23 show a composition bias toward polar residues; the sequence is MASTHSSLTTVQNNANNKSNRTL. The segment at 1 to 24 is disordered; the sequence is MASTHSSLTTVQNNANNKSNRTLN. Over 1–59 the chain is Cytoplasmic; the sequence is MASTHSSLTTVQNNANNKSNRTLNTERRLSMESSVFTLYNKAADELDTSQRSAFQACHR. Residues 60–80 traverse the membrane as a helical segment; sequence EFLAEFIGTVILVLLTCGFCA. The Extracellular portion of the chain corresponds to 81–92; sequence EQTLHIEESKSW. A helical transmembrane segment spans residues 93–113; the sequence is LTSSFGSGLSVLIGICVSGHV. Topologically, residues 114-145 are cytoplasmic; sequence SGAHLNPAVTIAFCIFSGFPIRKVPSYITAQL. The NPA 1 motif lies at 119-121; sequence NPA. A helical transmembrane segment spans residues 146 to 166; that stretch reads LGAFAGAALLYIIIEPAIVQF. Residues 167-192 lie on the Extracellular side of the membrane; it reads DGGQRYILGEKSTAGIFGTYPPLYVG. The chain crosses the membrane as a helical span at residues 193-213; that stretch reads IGSAIASEIMGTAMLLLVIMV. Residues 214–226 are Cytoplasmic-facing; that stretch reads TGHPNNLPYKSAQ. Residues 227 to 247 traverse the membrane as a helical segment; that stretch reads GAMIALGITTISLCIGYTSGF. Residues 248-278 lie on the Extracellular side of the membrane; it reads SLNPARDFGPRLFTAIAGWGFDVFKVYHYYA. The NPA 2 motif lies at 250–252; that stretch reads NPA. A helical membrane pass occupies residues 279-299; the sequence is LVPMFAPILGGLVGLMLMMPF. Residues 300 to 306 lie on the Cytoplasmic side of the membrane; the sequence is SFLSVRA.

It belongs to the MIP/aquaporin (TC 1.A.8) family.

The protein resides in the cell membrane. The enzyme catalyses H2O(in) = H2O(out). Functionally, water channel required to facilitate the transport of water across membranes. Contributes to water uptake of spores during the early stages of spore germination. Aquaporins AQP1 and AQP2 act as extracellular pH sensors and enable the spores to hydrate under favorable conditions and to commence germination. Wounded vegetables and fruit present acidic pH, so the optimal pH range for germination is adapted to the relevant host pH. This Rhizopus delemar (strain RA 99-880 / ATCC MYA-4621 / FGSC 9543 / NRRL 43880) (Mucormycosis agent) protein is Aquaporin-1.